Consider the following 598-residue polypeptide: mRNA-capping enzyme (598 aa).

Residues 1-215 (MSQTGAPPRW…GSASAPASEP (215 aa)) form a TPase region. The Tyrosine-protein phosphatase domain occupies 25 to 183 (LPMKTMLGPR…FRRYGDVEDA (159 aa)). Residue cysteine 126 is the Phosphocysteine intermediate of the active site. Residues 186–227 (APPLPEWCFDEDEEEDGEEDGSASAPASEPSSSHTGQSKKKK) form a disordered region. Acidic residues predominate over residues 193 to 206 (CFDEDEEEDGEEDG). Over residues 207-218 (SASAPASEPSSS) the composition is skewed to low complexity. A GTase region spans residues 233–598 (GAVFLEGVSV…PKRSANSIPQ (366 aa)). The N6-GMP-lysine intermediate role is filled by lysine 298. GTP-binding positions include arginine 303, arginine 319, 347–349 (DGE), 462–464 (KWK), and 532–537 (RQRVDK). Residues 575–598 (RKNPADSDLMPPPPPKRSANSIPQ) are disordered.

It in the N-terminal section; belongs to the non-receptor class of the protein-tyrosine phosphatase family. In the C-terminal section; belongs to the eukaryotic GTase family.

It localises to the nucleus. The catalysed reaction is a 5'-end triphospho-ribonucleoside in mRNA + H2O = a 5'-end diphospho-ribonucleoside in mRNA + phosphate + H(+). It catalyses the reaction a 5'-end diphospho-ribonucleoside in mRNA + GTP + H(+) = a 5'-end (5'-triphosphoguanosine)-ribonucleoside in mRNA + diphosphate. Bifunctional mRNA-capping enzyme exhibiting RNA 5'-triphosphate monophosphatase activity in the N-terminal part and mRNA guanylyltransferase activity in the C-terminal part. Catalyzes the first two steps of cap formation: by removing the gamma-phosphate from the 5'-triphosphate end of nascent mRNA to yield a diphosphate end, and by transferring the GMP moiety of GTP to the 5'-diphosphate terminus of RNA via a covalent enzyme-GMP reaction intermediate. The protein is mRNA-capping enzyme (rngtt) of Danio rerio (Zebrafish).